Consider the following 180-residue polypeptide: Prorelaxin (180 aa).

Positions Met-1 to Ala-25 are cleaved as a signal peptide. Intrachain disulfides connect Cys-33–Cys-167, Cys-45–Cys-180, and Cys-166–Cys-171. Positions Ser-53–Ile-154 are cleaved as a propeptide — connecting peptide.

The protein belongs to the insulin family. In terms of assembly, heterodimer of a B chain and an A chain linked by two disulfide bonds. Expressed by the placenta. Exclusively detected in cells located in the lamellar placental labyrinth and absent from other placental and non-placental uterine parts.

It localises to the secreted. Its function is as follows. Relaxin is an ovarian hormone that acts with estrogen to produce dilatation of the birth canal in many mammals. The polypeptide is Prorelaxin (RLN) (Felis catus (Cat)).